The sequence spans 488 residues: Endo-1,6-beta-D-glucanase neg1 (488 aa).

Positions 1 to 17 (MRISVGALLGLTALSHA) are cleaved as a signal peptide. The active-site Proton donor is the glutamate 241. Glutamate 337 serves as the catalytic Nucleophile. N-linked (GlcNAc...) asparagine glycosylation is present at asparagine 422.

This sequence belongs to the glycosyl hydrolase 30 family.

It localises to the secreted. It catalyses the reaction Random hydrolysis of (1-&gt;6)-linkages in (1-&gt;6)-beta-D-glucans.. In terms of biological role, endoglucanase that has highest activity on the linear beta-1,6-glucan pustulan and lower activity against laminarin (beta-1,3-glucans with beta-1,6-branches). Is active on C.albicans cell walls allowing the release of a previously described cell wall proteins. The sequence is that of Endo-1,6-beta-D-glucanase neg1 from Aspergillus fumigatus (strain ATCC MYA-4609 / CBS 101355 / FGSC A1100 / Af293) (Neosartorya fumigata).